Consider the following 318-residue polypeptide: Acetyl-coenzyme A carboxylase carboxyl transferase subunit alpha (318 aa).

A CoA carboxyltransferase C-terminal domain is found at 38–292 (KLEKRLAKLE…NKTITKSLHA (255 aa)).

It belongs to the AccA family. In terms of assembly, acetyl-CoA carboxylase is a heterohexamer composed of biotin carboxyl carrier protein (AccB), biotin carboxylase (AccC) and two subunits each of ACCase subunit alpha (AccA) and ACCase subunit beta (AccD).

It localises to the cytoplasm. It carries out the reaction N(6)-carboxybiotinyl-L-lysyl-[protein] + acetyl-CoA = N(6)-biotinyl-L-lysyl-[protein] + malonyl-CoA. It functions in the pathway lipid metabolism; malonyl-CoA biosynthesis; malonyl-CoA from acetyl-CoA: step 1/1. Its function is as follows. Component of the acetyl coenzyme A carboxylase (ACC) complex. First, biotin carboxylase catalyzes the carboxylation of biotin on its carrier protein (BCCP) and then the CO(2) group is transferred by the carboxyltransferase to acetyl-CoA to form malonyl-CoA. This is Acetyl-coenzyme A carboxylase carboxyl transferase subunit alpha from Listeria monocytogenes serotype 4b (strain CLIP80459).